The primary structure comprises 54 residues: ATP synthase protein 8 (54 aa).

A helical membrane pass occupies residues 8-28 (WWLLNFFLGWTSLLVIFIILL).

It belongs to the ATPase protein 8 family. In terms of assembly, F-type ATPases have 2 components, CF(1) - the catalytic core - and CF(0) - the membrane proton channel.

The protein resides in the mitochondrion membrane. Mitochondrial membrane ATP synthase (F(1)F(0) ATP synthase or Complex V) produces ATP from ADP in the presence of a proton gradient across the membrane which is generated by electron transport complexes of the respiratory chain. F-type ATPases consist of two structural domains, F(1) - containing the extramembraneous catalytic core and F(0) - containing the membrane proton channel, linked together by a central stalk and a peripheral stalk. During catalysis, ATP synthesis in the catalytic domain of F(1) is coupled via a rotary mechanism of the central stalk subunits to proton translocation. Part of the complex F(0) domain. Minor subunit located with subunit a in the membrane. This Patiria pectinifera (Starfish) protein is ATP synthase protein 8 (MT-ATP8).